Reading from the N-terminus, the 182-residue chain is Probable tyrosine phosphatase protein H4 (182 aa).

The Tyrosine-protein phosphatase domain maps to 1–182; the sequence is MEINKFICSQ…TVLKIQKSKI (182 aa). The Phosphocysteine intermediate role is filled by Cys-142.

It belongs to the protein-tyrosine phosphatase family.

It carries out the reaction O-phospho-L-tyrosyl-[protein] + H2O = L-tyrosyl-[protein] + phosphate. The chain is Probable tyrosine phosphatase protein H4 (H5) from Microplitis demolitor (Parasitoid wasp).